The chain runs to 207 residues: Large ribosomal subunit protein uL4 (207 aa).

The interval 58-85 (AGSGKKPFKQKGTGQARQGCRRAPQYPG) is disordered.

It belongs to the universal ribosomal protein uL4 family. Part of the 50S ribosomal subunit.

One of the primary rRNA binding proteins, this protein initially binds near the 5'-end of the 23S rRNA. It is important during the early stages of 50S assembly. It makes multiple contacts with different domains of the 23S rRNA in the assembled 50S subunit and ribosome. In terms of biological role, forms part of the polypeptide exit tunnel. The protein is Large ribosomal subunit protein uL4 of Geotalea uraniireducens (strain Rf4) (Geobacter uraniireducens).